Here is a 174-residue protein sequence, read N- to C-terminus: Co-chaperone protein HscB homolog (174 aa).

The 73-residue stretch at Asn-2–Leu-74 folds into the J domain.

This sequence belongs to the HscB family. Interacts with HscA and stimulates its ATPase activity.

Functionally, co-chaperone involved in the maturation of iron-sulfur cluster-containing proteins. Seems to help targeting proteins to be folded toward HscA. The sequence is that of Co-chaperone protein HscB homolog from Shewanella sp. (strain MR-4).